The sequence spans 715 residues: Polyribonucleotide nucleotidyltransferase (715 aa).

Mg(2+)-binding residues include Asp-493 and Asp-499. The KH domain maps to 560-619; sequence PRMITVKINPEKIRDVIGKGGSVIRALTEETGTTIDISDDGVVTIASTSSEGMAEAKKRI. The S1 motif domain maps to 629-697; that stretch reads GQVYEGTVLK…EKGRVRLSAK (69 aa).

This sequence belongs to the polyribonucleotide nucleotidyltransferase family. Requires Mg(2+) as cofactor.

The protein localises to the cytoplasm. The catalysed reaction is RNA(n+1) + phosphate = RNA(n) + a ribonucleoside 5'-diphosphate. Its function is as follows. Involved in mRNA degradation. Catalyzes the phosphorolysis of single-stranded polyribonucleotides processively in the 3'- to 5'-direction. This chain is Polyribonucleotide nucleotidyltransferase, found in Burkholderia orbicola (strain MC0-3).